A 657-amino-acid chain; its full sequence is Knob-associated histidine-rich protein (657 aa).

The signal sequence occupies residues 1–34 (MKSFKNKNTLRRKKAFPVFTKILLVSFLVWVLKC). Asn-42 carries an N-linked (GlcNAc...) asparagine glycan. Over residues 57 to 76 (AQKQHEHHHHHHHHHHHQHQ) the composition is skewed to basic residues. Disordered regions lie at residues 57 to 138 (AQKQ…PSNE), 282 to 301 (AHDG…SEGY), and 352 to 657 (VNKY…GCCG). The segment covering 99–108 (PQVHQQVHGQ) has biased composition (low complexity). Residues 112 to 123 (HHHHHHHHHHLH) are compositionally biased toward basic residues. Composition is skewed to basic and acidic residues over residues 357 to 378 (KHGD…EGEK) and 399 to 408 (KDNEDAESVK). Residues 409-425 (SKKHKSHDCEKKKSKKH) show a composition bias toward basic residues. Residues 426–435 (KDNEDAESVK) are compositionally biased toward basic and acidic residues. Residues 453 to 468 (AAKKLTKKIKIKKKTN) are compositionally biased toward basic residues. The segment covering 473-496 (DGSKAHEKKENETKNTAGENKKVD) has biased composition (basic and acidic residues). A compositionally biased stretch (polar residues) spans 497–508 (STSADNKSTNAA). Basic and acidic residues-rich tracts occupy residues 512–523 (AKDKTQGGKTDK) and 551–578 (STSK…EATK). A compositionally biased stretch (low complexity) spans 590-614 (ASTTEGATKGASTTAGSTTGATTGA). Polar residues predominate over residues 628 to 643 (AANNGEQVMSRGQAQL). Positions 648-657 (KKKKKRGCCG) are enriched in basic residues.

Its subcellular location is the secreted. Functionally, KAHRP might mimick human histidine-rich glycoproteins to anchor host thrombospondin or a parasite analog in a binding complex with the endothelial cell receptor. This is Knob-associated histidine-rich protein (SD17) from Plasmodium falciparum (isolate NF7 / Ghana).